The chain runs to 726 residues: Endo-1,4-beta-xylanase/feruloyl esterase (726 aa).

Residues 1-19 (MKKLLVALSLIAGSLTASA) form the signal peptide. One can recognise a GH10 domain in the interval 27–369 (YAAGPGLKDA…KRSLQIIRDF (343 aa)). Catalysis depends on glutamate 161, which acts as the Proton donor; for xylanase activity. Residue glutamate 280 is the Nucleophile; for xylanase activity of the active site. The interval 370 to 726 (DAAMDNRKPK…LEKMAQSLFK (357 aa)) is feruloyl esterase. Serine 629 acts as the Nucleophile; for esterase activity in catalysis.

It in the N-terminal section; belongs to the glycosyl hydrolase 10 (cellulase F) family. Monomer or homodimer.

The catalysed reaction is Endohydrolysis of (1-&gt;4)-beta-D-xylosidic linkages in xylans.. The enzyme catalyses feruloyl-polysaccharide + H2O = ferulate + polysaccharide.. It participates in glycan degradation; xylan degradation. In terms of biological role, involved in degradation of plant cell wall polysaccharides. Has endo-xylanase activity towards substrates such as oat spelt xylan (OSX), acetylated xylo-oligosaccharides and acetylated xylan, producing primarily xylobiose; cannot hydrolyze xylobiose to xylose. Also has feruloyl esterase activity, releasing ferulic acid from methylferulate, and from the more natural substrates wheat bran, corn fiber, and XOS(FA,Ac), a corn fiber-derived substrate enriched in O-acetyl and ferulic acid esters. Exhibits negligible acetyl esterase activity on sugar acetates. Acts synergistically with Xyl3A to increase the release of xylose from xylan. Does not possess endoglucanase or mannanase activities since it is not able to hydrolyze carboxymethyl cellulose and locust bean gum. The sequence is that of Endo-1,4-beta-xylanase/feruloyl esterase from Xylanibacter ruminicola (strain ATCC 19189 / DSM 19721 / CIP 105475 / JCM 8958 / 23) (Prevotella ruminicola).